The chain runs to 1252 residues: ABC transporter B family member 19 (1252 aa).

Asn5 carries an N-linked (GlcNAc...) asparagine glycan. Residues 41 to 330 (MFVGSLGAIV…SFSNLGAFSK (290 aa)) enclose the ABC transmembrane type-1 1 domain. A run of 2 helical transmembrane segments spans residues 42–62 (FVGS…FLLF) and 88–108 (LYFV…IACW). Asp136 provides a ligand contact to ATP. The next 4 helical transmembrane spans lie at 163–183 (VGNF…GFVS), 187–207 (LALL…LYAY), 274–294 (CTYG…GVFI), and 308–328 (IFSA…LGAF). Residues Tyr276 and Trp283 each contribute to the brassinolide site. The ABC transporter 1 domain maps to 365–601 (IEFKDVTFSY…SGAYASLIRF (237 aa)). ATP-binding residues include Tyr374, Ser376, Gly405, Lys406, Ser407, Thr408, and Glu529. N-linked (GlcNAc...) asparagine glycosylation occurs at Asn641. The 289-residue stretch at 687–975 (SIMGAVGSIL…TVSLAPEIIR (289 aa)) folds into the ABC transmembrane type-1 2 domain. Transmembrane regions (helical) follow at residues 688–708 (IMGA…AIVM) and 732–752 (FIYI…HYFF). An N-linked (GlcNAc...) asparagine glycan is attached at Asn758. Asp780 serves as a coordination point for ATP. Asn785 and Asn814 each carry an N-linked (GlcNAc...) asparagine glycan. The next 3 membrane-spanning stretches (helical) occupy residues 822–842 (FIVA…TFPL), 914–934 (GFLF…ILWY), and 949–969 (VIKV…TVSL). Positions 965-1252 (ETVSLAPEII…RLLQLQTHRI (288 aa)) are interaction with FKBP42/TWD1. The ABC transporter 2 domain occupies 1010 to 1246 (IEFRHVDFAY…PEGAYSRLLQ (237 aa)). Residues Tyr1019, Ser1021, Arg1022, Lys1051, Ser1052, and Ser1053 each coordinate ATP.

It belongs to the ABC transporter superfamily. ABCB family. Multidrug resistance exporter (TC 3.A.1.201) subfamily. Interacts with 1-naphthylphthalamic acid (NPA), and FKBP42/TWD1. Post-translationally, phosphorylated by PHOT1 in phototropic seedlings, to modulates auxin export and distribution and regulates leaf and petiole curling. Ubiquitous, mostly in shoot meristems. Present in the majority of stem cells, predominantly in a non-polar manner. Accumulates in seedlings roots and hypocotyls, and in roots apices and inflorescences.

It localises to the cell membrane. The enzyme catalyses (indol-3-yl)acetate(in) + ATP + H2O = (indol-3-yl)acetate(out) + ADP + phosphate + H(+). It carries out the reaction brassinolide(in) + ATP + H2O = brassinolide(out) + ADP + phosphate + H(+). It catalyses the reaction 24-epi-brassinolide(in) + ATP + H2O = 24-epi-brassinolide(out) + ADP + phosphate + H(+). The catalysed reaction is 24-epi-castasterone(in) + ATP + H2O = 24-epi-castasterone(out) + ADP + phosphate + H(+). The enzyme catalyses castasterone(in) + ATP + H2O = castasterone(out) + ADP + phosphate + H(+). Its activity is regulated as follows. Transport capacity is stimulated by the chaperone protein FKBP42/TWD1. ATPase activity is specifically activated by bioactive brassinosteroids in a dose-dependent manner, including brassinolide (BL), 24-epiBL and 24-epicastasterone (24-epiCS). Inhibited by vanadate. In terms of biological role, brassinosteroid exporter that, in conjunction with ABCB1, supports the accumulation of exogenous brassinosteroids (BR) in the apoplast, thus promoting BR signaling initiation involving the specific receptor BRI1 and required for plant growth and stress responses. Mediates the transport of castasterone (CSA) and brassinolide (BL) across the plasma membrane. Auxin efflux transporter that acts as a negative regulator of light signaling to promote hypocotyl elongation by mediating leaf tip to petiole auxin flux. Required for the regulation of leaf position and morphology during PHOT1-mediated blue light responses involving auxin distribution, especially in low light fluence. Together with ABCB1 and in a FKBP42/TWD1-dependent manner, supports seed development by promoting stamen elongation and, to a lesser extent, anther dehiscence and pollen maturation, probably as auxin transporters. Contributes to the connective auxin transport (CAT) that ensures communication across the shoot system, including auxin loading at axillary bud apices to influence strigolactone-mediated bud outgrowth responses and shoot branching control. Mediates the accumulation of chlorophyll and anthocyanin, as well as the expression of genes in response to light. Participates in auxin efflux and thus regulates the polar auxin basipetal transport (from auxin-producing leaves to auxin-sensitive tissues, and from root tips to root elongating zone). Involved in diverse auxin-mediated responses including gravitropism, phototropism and lateral root formation. Required for the regulation of organ bending, such as gravitropic root bending. The polypeptide is ABC transporter B family member 19 (Arabidopsis thaliana (Mouse-ear cress)).